The following is a 255-amino-acid chain: Triosephosphate isomerase (255 aa).

9 to 11 (NWK) is a binding site for substrate. Residue H95 is the Electrophile of the active site. E167 functions as the Proton acceptor in the catalytic mechanism. Substrate is bound by residues G173, S212, and 233–234 (GG).

Belongs to the triosephosphate isomerase family. As to quaternary structure, homodimer.

It is found in the cytoplasm. The catalysed reaction is D-glyceraldehyde 3-phosphate = dihydroxyacetone phosphate. Its pathway is carbohydrate biosynthesis; gluconeogenesis. It functions in the pathway carbohydrate degradation; glycolysis; D-glyceraldehyde 3-phosphate from glycerone phosphate: step 1/1. In terms of biological role, involved in the gluconeogenesis. Catalyzes stereospecifically the conversion of dihydroxyacetone phosphate (DHAP) to D-glyceraldehyde-3-phosphate (G3P). This Erwinia tasmaniensis (strain DSM 17950 / CFBP 7177 / CIP 109463 / NCPPB 4357 / Et1/99) protein is Triosephosphate isomerase.